The sequence spans 221 residues: Probable septum site-determining protein MinC (221 aa).

It belongs to the MinC family. In terms of assembly, interacts with MinD and FtsZ.

In terms of biological role, cell division inhibitor that blocks the formation of polar Z ring septums. Rapidly oscillates between the poles of the cell to destabilize FtsZ filaments that have formed before they mature into polar Z rings. Prevents FtsZ polymerization. The chain is Probable septum site-determining protein MinC from Shewanella loihica (strain ATCC BAA-1088 / PV-4).